A 155-amino-acid chain; its full sequence is RNA pyrophosphohydrolase (155 aa).

In terms of domain architecture, Nudix hydrolase spans 6 to 148 (GYRANVAIVL…KQEVYRKALT (143 aa)). A Nudix box motif is present at residues 38–59 (GGVATGETPLQAMYRELHEEIG).

This sequence belongs to the Nudix hydrolase family. RppH subfamily. A divalent metal cation serves as cofactor.

Its function is as follows. Accelerates the degradation of transcripts by removing pyrophosphate from the 5'-end of triphosphorylated RNA, leading to a more labile monophosphorylated state that can stimulate subsequent ribonuclease cleavage. The chain is RNA pyrophosphohydrolase from Francisella tularensis subsp. tularensis (strain FSC 198).